A 547-amino-acid chain; its full sequence is Smu-2 suppressor of mec-8 and unc-52 protein (547 aa).

Disordered regions lie at residues 18-125, 164-202, 288-459, 496-515, and 524-547; these read TSAR…AQDQ, IDKS…AQEL, AEPK…AGPK, NGEG…AKRL, and KIMD…KPKY. Basic and acidic residues predominate over residues 34–44; that stretch reads ADPKTGDDKPA. The span at 45–58 shows a compositional bias: basic residues; it reads SFKHKHLKPAKFKK. Residues 66–94 are a coiled coil; the sequence is KAKKEKTEADEDEAALKNILKNYRDRAAE. Basic and acidic residues predominate over residues 87–106; it reads NYRDRAAERRKQGDEKEDPS. The required and sufficient for interaction with smu-1 stretch occupies residues 163–223; sequence EIDKSDDDDD…SLHRVLFKNE (61 aa). The segment covering 166 to 178 has biased composition (acidic residues); that stretch reads KSDDDDDDDIDTA. Composition is skewed to low complexity over residues 185-196 and 307-317; these read SSSSSSKPSEAS and APGAAAAAPGA. The segment covering 330–423 has biased composition (basic and acidic residues); that stretch reads VPSRKSRDSR…EREKKRKELE (94 aa). 12 consecutive repeat copies span residues 336–337, 339–340, 348–349, 350–351, 352–353, 354–355, 356–357, 358–359, 360–361, 362–363, 364–365, and 367–368. Residues 336-368 are 12 X 2 AA repeats of R-[DS]; sequence RDSRDAGRRGSRRDRSRDRSRDRDRDRDRDNRD. A coiled-coil region spans residues 371-427; that stretch reads FEKSANSRREEEQNRREQQRERERAEQERRREREKEREQEKAKEREKKRKELEESSG.

This sequence belongs to the RED family. In terms of assembly, probable component of the spliceosome. Heterotetramer with smu-1. The smu-1 homodimer interacts (via the N-terminal region including the LisH and CTLH domains) with smu-2, giving rise to a heterotetramer. Ubiquitous.

It localises to the nucleus. Its function is as follows. Auxiliary spliceosomal protein that regulates selection of alternative splice sites in a small set of target pre-mRNA species. Selectively regulates alternative splicing of unc-52 exon 17. Thus, smu-2 mutants selectively suppress the effects of unc-52 nonsense mutations in exon 17 by promoting the accumulation of unc-52 isoforms that lack exon 17. In contrast, smu-2 mutants do not suppress the effects of an unc-52 mutation that affects the 5' splice site of exon 16. Required for normal accumulation of smu-1. The chain is Smu-2 suppressor of mec-8 and unc-52 protein from Caenorhabditis elegans.